The primary structure comprises 224 residues: Response regulator protein GraR (224 aa).

In terms of domain architecture, Response regulatory spans D2–Y115. A 4-aspartylphosphate modification is found at D51. Positions K126–G224 form a DNA-binding region, ompR/PhoB-type.

Phosphorylated by GraS.

The protein resides in the cytoplasm. Functionally, member of the two-component regulatory system GraR/GraS involved in resistance against cationic antimicrobial peptides (CAMPs). The protein is Response regulator protein GraR (graR) of Staphylococcus saprophyticus subsp. saprophyticus (strain ATCC 15305 / DSM 20229 / NCIMB 8711 / NCTC 7292 / S-41).